The primary structure comprises 605 residues: UvrABC system protein C (605 aa).

Positions 13–92 constitute a GIY-YIG domain; that stretch reads TSPGVYLMKD…IKKHHPKYNV (80 aa). Positions 205–240 constitute a UVR domain; that stretch reads SEIIQDLEKSIEKASQEQKFEQAGIYYRTLKLIQQA.

This sequence belongs to the UvrC family. Interacts with UvrB in an incision complex.

The protein localises to the cytoplasm. The UvrABC repair system catalyzes the recognition and processing of DNA lesions. UvrC both incises the 5' and 3' sides of the lesion. The N-terminal half is responsible for the 3' incision and the C-terminal half is responsible for the 5' incision. The sequence is that of UvrABC system protein C from Chlamydia caviae (strain ATCC VR-813 / DSM 19441 / 03DC25 / GPIC) (Chlamydophila caviae).